A 158-amino-acid chain; its full sequence is MRWLPFIAIFLYVYIEISIFIQVAHVLGVLLTLVLVIFTSVIGMSLVRNQGFKNFVLMQQKMAAGENPAAEMIKSVSLIIAGLLLLLPGFFTDFLGLLLLLPPVQKHLTVKLMPHLRFSRMPGGGFSAGTGGGNTFDGEYQRKDDERDRLDHKDDRQD.

The Cytoplasmic segment spans residues 1–16 (MRWLPFIAIFLYVYIE). The chain crosses the membrane as a helical span at residues 17 to 37 (ISIFIQVAHVLGVLLTLVLVI). The Periplasmic portion of the chain corresponds to 38–78 (FTSVIGMSLVRNQGFKNFVLMQQKMAAGENPAAEMIKSVSL). The chain crosses the membrane as a helical span at residues 79–99 (IIAGLLLLLPGFFTDFLGLLL). Over 100 to 158 (LLPPVQKHLTVKLMPHLRFSRMPGGGFSAGTGGGNTFDGEYQRKDDERDRLDHKDDRQD) the chain is Cytoplasmic. The segment covering 125–135 (GFSAGTGGGNT) has biased composition (gly residues). A disordered region spans residues 125-158 (GFSAGTGGGNTFDGEYQRKDDERDRLDHKDDRQD). Residues 139 to 158 (EYQRKDDERDRLDHKDDRQD) are compositionally biased toward basic and acidic residues.

This sequence belongs to the UPF0716 (FxsA) family.

Its subcellular location is the cell inner membrane. In terms of biological role, overexpression alleviates the exclusion of phage T7 in cells harboring the F plasmid. This Escherichia coli (strain K12) protein is UPF0716 protein FxsA (fxsA).